We begin with the raw amino-acid sequence, 311 residues long: Olfactory receptor 10G7 (311 aa).

Over 1–23 (MSNATLLTAFILTGLPHAPGLDA) the chain is Extracellular. Residue Asn-3 is glycosylated (N-linked (GlcNAc...) asparagine). The chain crosses the membrane as a helical span at residues 24–44 (PLFGIFLVVYVLTVLGNLLIL). Over 45 to 52 (LVIRVDSH) the chain is Cytoplasmic. Residues 53 to 73 (LHTPMYYFLTNLSFIDMWFST) traverse the membrane as a helical segment. The Extracellular portion of the chain corresponds to 74-98 (VTVPKMLMTLVSPSGRTISFHSCVA). Residues Cys-96 and Cys-188 are joined by a disulfide bond. Residues 99–119 (QLYFFHFLGSTECFLYTVMSY) traverse the membrane as a helical segment. Topologically, residues 120–138 (DRYLAISYPLRYTNMMTGR) are cytoplasmic. A helical transmembrane segment spans residues 139-159 (SCALLATGTWLSGSLHSAVQT). Topologically, residues 160 to 196 (ILTFHLPYCGPNQIQHYFCDAPPILKLACADTSANEM) are extracellular. The chain crosses the membrane as a helical span at residues 197–216 (VIFVNIGLVASGCFVLIVLS). Over 217 to 236 (YVSIVCSILRIRTSEGRHRA) the chain is Cytoplasmic. The chain crosses the membrane as a helical span at residues 237 to 257 (FQTCASHCIVVLCFFGPGLFI). Residues 258–268 (YLRPGSRDALH) are Extracellular-facing. Residues 269–289 (GVVAVFYTTLTPLFNPVVYTL) traverse the membrane as a helical segment. Topologically, residues 290-311 (RNKEVKKALLKLKNGSVFAQGE) are cytoplasmic.

This sequence belongs to the G-protein coupled receptor 1 family.

Its subcellular location is the cell membrane. Functionally, odorant receptor. This Homo sapiens (Human) protein is Olfactory receptor 10G7 (OR10G7).